The chain runs to 484 residues: PTS system MurNAc-GlcNAc-specific EIIBC component (484 aa).

The region spanning 5–87 is the PTS EIIB type-1 domain; it reads QQLAERIIAA…AELSGVKLGD (83 aa). C27 (phosphocysteine intermediate; for EIIB activity) is an active-site residue. One can recognise a PTS EIIC type-1 domain in the interval 130–484; that stretch reads KSIANIFIPL…AMRQTDLLGD (355 aa). The next 10 membrane-spanning stretches (helical) occupy residues 135–155, 160–180, 200–220, 234–254, 274–294, 305–325, 349–369, 384–404, 408–428, and 450–470; these read IFIP…IAAV, MVAG…FNVI, FGAT…TGIA, LQPG…LSIV, IALL…AGFV, IISI…LPLV, LLPI…ALWV, ALPV…TLPL, FLTA…IGHI, and LGYI…TYLF.

The protein resides in the cell membrane. The enzyme catalyses N-acetyl-beta-D-muramate-(1-&gt;4)-N-acetyl-D-glucosamine(out) + N(pros)-phospho-L-histidyl-[protein] = 6-phospho-N-acetyl-beta-D-muramate-(1-&gt;4)-N-acetyl-D-glucosamine(in) + L-histidyl-[protein]. It functions in the pathway cell wall biogenesis; peptidoglycan recycling. The phosphoenolpyruvate-dependent sugar phosphotransferase system (sugar PTS), a major carbohydrate active transport system, catalyzes the phosphorylation of incoming sugar substrates concomitantly with their translocation across the cell membrane. This system is involved in the uptake and phosphorylation of MurNAc-GlcNAc, the principle peptidoglycan turnover product of S.aureus, yielding cytoplasmic MurNAc 6P-GlcNAc. The chain is PTS system MurNAc-GlcNAc-specific EIIBC component from Staphylococcus aureus (strain Mu50 / ATCC 700699).